Reading from the N-terminus, the 383-residue chain is Succinyl-diaminopimelate desuccinylase (383 aa).

Histidine 73 is a Zn(2+) binding site. Residue aspartate 75 is part of the active site. Residue aspartate 107 participates in Zn(2+) binding. The active-site Proton acceptor is the glutamate 141. Zn(2+) is bound by residues glutamate 142, glutamate 170, and histidine 356.

It belongs to the peptidase M20A family. DapE subfamily. As to quaternary structure, homodimer. Zn(2+) serves as cofactor. Co(2+) is required as a cofactor.

It catalyses the reaction N-succinyl-(2S,6S)-2,6-diaminopimelate + H2O = (2S,6S)-2,6-diaminopimelate + succinate. It functions in the pathway amino-acid biosynthesis; L-lysine biosynthesis via DAP pathway; LL-2,6-diaminopimelate from (S)-tetrahydrodipicolinate (succinylase route): step 3/3. Its function is as follows. Catalyzes the hydrolysis of N-succinyl-L,L-diaminopimelic acid (SDAP), forming succinate and LL-2,6-diaminopimelate (DAP), an intermediate involved in the bacterial biosynthesis of lysine and meso-diaminopimelic acid, an essential component of bacterial cell walls. This Pseudomonas putida (strain ATCC 700007 / DSM 6899 / JCM 31910 / BCRC 17059 / LMG 24140 / F1) protein is Succinyl-diaminopimelate desuccinylase.